Here is a 284-residue protein sequence, read N- to C-terminus: 3-methyl-2-oxobutanoate hydroxymethyltransferase 2 (284 aa).

Asp49 and Asp88 together coordinate Mg(2+). 3-methyl-2-oxobutanoate contacts are provided by residues 49–50 (DS), Asp88, and Lys118. A Mg(2+)-binding site is contributed by Glu120. Catalysis depends on Glu187, which acts as the Proton acceptor.

This sequence belongs to the PanB family. Homodecamer; pentamer of dimers. Mg(2+) serves as cofactor.

The protein localises to the cytoplasm. It catalyses the reaction 3-methyl-2-oxobutanoate + (6R)-5,10-methylene-5,6,7,8-tetrahydrofolate + H2O = 2-dehydropantoate + (6S)-5,6,7,8-tetrahydrofolate. It functions in the pathway cofactor biosynthesis; (R)-pantothenate biosynthesis; (R)-pantoate from 3-methyl-2-oxobutanoate: step 1/2. Catalyzes the reversible reaction in which hydroxymethyl group from 5,10-methylenetetrahydrofolate is transferred onto alpha-ketoisovalerate to form ketopantoate. The protein is 3-methyl-2-oxobutanoate hydroxymethyltransferase 2 of Burkholderia cenocepacia (strain HI2424).